The primary structure comprises 288 residues: ATP synthase gamma chain (288 aa).

It belongs to the ATPase gamma chain family. F-type ATPases have 2 components, CF(1) - the catalytic core - and CF(0) - the membrane proton channel. CF(1) has five subunits: alpha(3), beta(3), gamma(1), delta(1), epsilon(1). CF(0) has three main subunits: a, b and c.

The protein resides in the cell inner membrane. Produces ATP from ADP in the presence of a proton gradient across the membrane. The gamma chain is believed to be important in regulating ATPase activity and the flow of protons through the CF(0) complex. This is ATP synthase gamma chain from Legionella pneumophila (strain Corby).